The sequence spans 601 residues: Probable N-acetylgalactosaminyltransferase 7 (601 aa).

Topologically, residues 1–20 are cytoplasmic; the sequence is MIIARKKLQLQRLWRQRGCR. Residues 21–38 form a helical; Signal-anchor for type II membrane protein membrane-spanning segment; the sequence is VATYICLGVLVLFGFVYN. Over 39-601 the chain is Lumenal; that stretch reads SKGNSMSSIK…FVWKEFYQSS (563 aa). Residues 61 to 108 are disordered; sequence DLTNKELPGGPDPNTIFRGSELGNYEPKEPEIPSNQPGEHGKPVPVTD. N-linked (GlcNAc...) asparagine glycosylation occurs at Asn135. 5 cysteine pairs are disulfide-bonded: Cys146/Cys382, Cys373/Cys452, Cys490/Cys506, Cys529/Cys542, and Cys568/Cys583. Residues 155–265 are catalytic subdomain A; sequence LPTVSVVVVF…TNWLPPLLAP (111 aa). Substrate contacts are provided by Asp196 and Arg226. Residues Asp249 and His251 each contribute to the Mn(2+) site. Residues 328–390 form a catalytic subdomain B region; that stretch reads PFRSPTHAGG…PCSHVGHVYR (63 aa). Residue Trp359 coordinates substrate. His387 contributes to the Mn(2+) binding site. The substrate site is built by Arg390 and Tyr395. One can recognise a Ricin B-type lectin domain in the interval 477-595; sequence DVWGEARNPA…DNERQKFVWK (119 aa).

The protein belongs to the glycosyltransferase 2 family. GalNAc-T subfamily. Mn(2+) serves as cofactor.

Its subcellular location is the golgi apparatus membrane. The protein operates within protein modification; protein glycosylation. Functionally, probable glycopeptide transferase involved in O-linked oligosaccharide biosynthesis. Glycopeptide transferases catalyze the transfer of an N-acetyl-D-galactosamine residue to an already glycosylated peptide. In contrast to other members of the family, it does not act as a peptide transferase that transfers GalNAc onto serine or threonine residue on peptides that have been tested. Some peptide transferase activity is however not excluded, considering that its appropriate peptide substrate may remain unidentified. This is Probable N-acetylgalactosaminyltransferase 7 (gly-7) from Caenorhabditis elegans.